Reading from the N-terminus, the 723-residue chain is Fatty acid oxidation complex subunit alpha (723 aa).

Positions 1 to 189 (MIYQAETLQV…KIGLLDAVVD (189 aa)) are enoyl-CoA hydratase/isomerase. Asp296 serves as a coordination point for substrate. Residues 311 to 723 (SKDTQRAAVL…FYGAQQQGSI (413 aa)) are 3-hydroxyacyl-CoA dehydrogenase. NAD(+) is bound by residues Met325, Asp344, 401 to 403 (VVE), Lys408, and Ser430. The active-site For 3-hydroxyacyl-CoA dehydrogenase activity is His451. Residue Asn454 coordinates NAD(+). 2 residues coordinate substrate: Asn501 and Tyr661.

The protein in the N-terminal section; belongs to the enoyl-CoA hydratase/isomerase family. In the C-terminal section; belongs to the 3-hydroxyacyl-CoA dehydrogenase family. As to quaternary structure, heterotetramer of two alpha chains (FadB) and two beta chains (FadA).

The enzyme catalyses a (3S)-3-hydroxyacyl-CoA + NAD(+) = a 3-oxoacyl-CoA + NADH + H(+). It carries out the reaction a (3S)-3-hydroxyacyl-CoA = a (2E)-enoyl-CoA + H2O. The catalysed reaction is a 4-saturated-(3S)-3-hydroxyacyl-CoA = a (3E)-enoyl-CoA + H2O. It catalyses the reaction (3S)-3-hydroxybutanoyl-CoA = (3R)-3-hydroxybutanoyl-CoA. The enzyme catalyses a (3Z)-enoyl-CoA = a 4-saturated (2E)-enoyl-CoA. It carries out the reaction a (3E)-enoyl-CoA = a 4-saturated (2E)-enoyl-CoA. It participates in lipid metabolism; fatty acid beta-oxidation. Involved in the aerobic and anaerobic degradation of long-chain fatty acids via beta-oxidation cycle. Catalyzes the formation of 3-oxoacyl-CoA from enoyl-CoA via L-3-hydroxyacyl-CoA. It can also use D-3-hydroxyacyl-CoA and cis-3-enoyl-CoA as substrate. This is Fatty acid oxidation complex subunit alpha from Vibrio campbellii (strain ATCC BAA-1116).